The following is a 328-amino-acid chain: Gonadotropin-releasing hormone receptor (328 aa).

At 1–38 the chain is on the extracellular side; sequence MANGDSPDQNENHCSAINSSILLTPGSLPTLTLSGKIR. N-linked (GlcNAc...) asparagine glycosylation occurs at Asn18. A helical membrane pass occupies residues 39-58; it reads VTVTFFLFLLSTIFNTSFLL. Over 59–77 the chain is Cytoplasmic; sequence KLQNWTQRKEKRKKLSKMK. A helical membrane pass occupies residues 78-97; it reads VLLKHLTLANLLETLIVMPL. The Extracellular portion of the chain corresponds to 98–115; it reads DGMWNITVQWYAGELLCK. Asn102 carries N-linked (GlcNAc...) asparagine glycosylation. An intrachain disulfide couples Cys114 to Cys196. A helical membrane pass occupies residues 116–137; sequence VLSYLKLFSMYAPAFMMVVISL. Topologically, residues 138–164 are cytoplasmic; it reads DRSLAITRPLAVKSNSKLGQFMIGLAW. Residues 165-184 form a helical membrane-spanning segment; it reads LLSSIFAGPQLYIFGMIHLA. At 185 to 212 the chain is on the extracellular side; sequence DDSGQTEGFSQCVTHCSFPQWWHQAFYN. Residues 213–232 form a helical membrane-spanning segment; it reads FFTFSCLFIIPLLIMLICNA. Residues 233 to 281 are Cytoplasmic-facing; the sequence is KIIFTLTRVLHQDPHKLQLNQSKNNIPQARLRTLKMTVAFATSFTVCWT. Residues 282–300 form a helical membrane-spanning segment; sequence PYYVLGIWYWFDPDMVNRV. Residues 301-306 lie on the Extracellular side of the membrane; that stretch reads SDPVNH. The helical transmembrane segment at 307–326 threads the bilayer; it reads FFFLFAFLNPCFDPLIYGYF. Over 327-328 the chain is Cytoplasmic; it reads SL.

Belongs to the G-protein coupled receptor 1 family.

It localises to the cell membrane. Functionally, receptor for gonadotropin releasing hormone (GnRH) that mediates the action of GnRH to stimulate the secretion of the gonadotropic hormones luteinizing hormone (LH) and follicle-stimulating hormone (FSH). This receptor mediates its action by association with G-proteins that activate a phosphatidylinositol-calcium second messenger system. This is Gonadotropin-releasing hormone receptor (GNRHR) from Ovis aries (Sheep).